Here is a 430-residue protein sequence, read N- to C-terminus: MVTTLRQTDPDFEQKFAAFLSGKREVSEDVDRAVREIVDRVRREGDSALLDYSRRFDRIDLEKTGIAVTEAEIDAAFDAAPASTVEALKLARDRIEKHHARQLPKDDRYTDALGVELGSRWTAIEAVGLYVPGGTASYPSSVLMNAMPAKVAGVDRIVMVVPAPDGNLNPLVLVAARLAGVSEIYRVGGAQAIAALAYGTETIRPVAKIVGPGNAYVAAAKRIVFGTVGIDMIAGPSEVLIVADKDNNPDWIAADLLAQAEHDTAAQSILMTNDEAFAHAVEEAVERQLHTLARTETASASWRDFGAVILVKDFEDAIPLANRIAAEHLEIAVADAEAFVPRIRNAGSIFIGGYTPEVIGDYVGGCNHVLPTARSARFSSGLSVLDYMKRTSLLKLGSEQLRALGPAAIEIARAEGLDAHAQSVAIRLNL.

3 residues coordinate NAD(+): Tyr130, Gln191, and Asn214. Residues Ser237, Gln259, and His262 each contribute to the substrate site. Zn(2+) is bound by residues Gln259 and His262. Active-site proton acceptor residues include Glu327 and His328. Substrate-binding residues include His328, Asp361, Glu415, and His420. A Zn(2+)-binding site is contributed by Asp361. His420 provides a ligand contact to Zn(2+).

This sequence belongs to the histidinol dehydrogenase family. Zn(2+) is required as a cofactor.

The catalysed reaction is L-histidinol + 2 NAD(+) + H2O = L-histidine + 2 NADH + 3 H(+). Its pathway is amino-acid biosynthesis; L-histidine biosynthesis; L-histidine from 5-phospho-alpha-D-ribose 1-diphosphate: step 9/9. In terms of biological role, catalyzes the sequential NAD-dependent oxidations of L-histidinol to L-histidinaldehyde and then to L-histidine. This chain is Histidinol dehydrogenase, found in Brucella suis biovar 1 (strain 1330).